A 193-amino-acid chain; its full sequence is Biphenyl dioxygenase subunit beta (193 aa).

It belongs to the bacterial ring-hydroxylating dioxygenase beta subunit family. As to quaternary structure, heterohexamer consisting of 3 BphA1 subunits and 3 BphA2 subunits. A ferredoxin (BphA3) and a ferredoxin reductase (BphA4) must be present to obtain activity.

It catalyses the reaction biphenyl + NADH + O2 + H(+) = (2R,3S)-3-phenylcyclohexa-3,5-diene-1,2-diol + NAD(+). It functions in the pathway xenobiotic degradation; biphenyl degradation; 2-hydroxy-2,4-pentadienoate and benzoate from biphenyl: step 1/4. Functionally, the beta subunit may be responsible for the substrate specificity of the enzyme. This is Biphenyl dioxygenase subunit beta (bphA2) from Pseudomonas sp. (strain KKS102).